Consider the following 156-residue polypeptide: Large ribosomal subunit protein uL15 (156 aa).

The span at 1–16 shows a compositional bias: basic residues; the sequence is MVRRFKRGTKYRRGSR. Positions 1 to 37 are disordered; sequence MVRRFKRGTKYRRGSRTHGWGRVGQHRKSGGSGGKGM.

This sequence belongs to the universal ribosomal protein uL15 family. Part of the 50S ribosomal subunit.

Functionally, binds to the 23S rRNA. The protein is Large ribosomal subunit protein uL15 of Pyrobaculum aerophilum (strain ATCC 51768 / DSM 7523 / JCM 9630 / CIP 104966 / NBRC 100827 / IM2).